The chain runs to 134 residues: Shikimate kinase (134 aa).

The protein belongs to the shikimate kinase family.

The protein localises to the cytoplasm. The enzyme catalyses shikimate + ATP = 3-phosphoshikimate + ADP + H(+). It participates in metabolic intermediate biosynthesis; chorismate biosynthesis; chorismate from D-erythrose 4-phosphate and phosphoenolpyruvate: step 5/7. The polypeptide is Shikimate kinase (aroK) (Neisseria gonorrhoeae).